A 776-amino-acid polypeptide reads, in one-letter code: Semaphorin-4F (776 aa).

Positions 1-39 (MLARAERPRPGPRPPPVFPFPPPLSLLLLLAILSAPVCG) are cleaved as a signal peptide. The Extracellular portion of the chain corresponds to 40-665 (RVPRSVPRTS…GPSNRAHTVV (626 aa)). The 469-residue stretch at 47–515 (RTSLPISEAD…SHTEVTQVNT (469 aa)) folds into the Sema domain. The N-linked (GlcNAc...) asparagine glycan is linked to Asn69. Cys117 and Cys127 are oxidised to a cystine. Asn138 carries N-linked (GlcNAc...) asparagine glycosylation. Disulfide bonds link Cys145–Cys154, Cys278–Cys389, and Cys302–Cys348. Residue Asn514 is glycosylated (N-linked (GlcNAc...) asparagine). The region spanning 517 to 568 (NCGRLQSCSECILAQDPVCAWSFRLDACVAHAGEHRGMVQDIESADVSSLCP) is the PSI domain. Intrachain disulfides connect Cys518-Cys535, Cys527-Cys544, and Cys592-Cys633. An Ig-like C2-type domain is found at 585-640 (VGHVVLPCSPSSAWASCVWHQPSGVTALTPRRDGLEVVVTPGAMGAYACECQEGGA). A helical membrane pass occupies residues 666–686 (GAGLVGFLLGVLAASLTLLLI). Over 687–776 (GRRQQRRRQR…PLATCDETSI (90 aa)) the chain is Cytoplasmic. Positions 702–741 (DKVGLDLGAPPSGTTSYSQDPPSPSPEDERLPLALGKRGS) are disordered. Phosphoserine occurs at positions 724 and 726. The PDZ-binding motif lies at 774–776 (TSI).

This sequence belongs to the semaphorin family. As to quaternary structure, interacts (via PDZ-binding motif) with DLG4/SAP90 (via PDZ domain 2); this interaction may promote translocation of DLG4/SAP90 to the membrane. In terms of tissue distribution, expressed at low levels in the developing embryo. Expressed at high levels in the lung and adult central nervous system, including the dorsal root ganglia.

Its subcellular location is the cell membrane. The protein resides in the postsynaptic density. The protein localises to the perikaryon. It is found in the cell projection. It localises to the dendrite. Functionally, probable cell surface receptor that regulates oligodendroglial precursor cell migration. Might also regulate differentiation of oligodendroglial precursor cells. Has growth cone collapse activity against retinal ganglion-cell axons. The sequence is that of Semaphorin-4F (Sema4f) from Rattus norvegicus (Rat).